We begin with the raw amino-acid sequence, 46 residues long: Major cold-shock protein (46 aa).

In terms of domain architecture, CSD spans 1–46 (EKGFGFISPADGSKDVFVHFSAIQSTSFKTLDEGQRVEFTIEQGQK).

Homodimer.

The protein localises to the cytoplasm. This is Major cold-shock protein (cspA) from Aeromonas salmonicida.